Consider the following 422-residue polypeptide: MATSRAFTLFAFTLSLLTVASTVSGHNITQILSDTPEYSSFNNYLSQTKLADEINSRTTITVLVLNNGAMSSLAGKHPLSVVKNALSLLVLLDYYDPLKLHQLSKGTTLTTTLYQTTGHALGNLGFVNVTDLKGGKVGFGSAAPGSKLDSSYTKSVKQIPYNISVLEINAPIIAPGILTAPAPSSAGVSNITGLLEKAGCKTFANLLVSSGVIKTFESTVEKGLTVFAPSDEAFKARGVPDLTNLTQAEVVSLLEYHALAEYKPKGSLKTNKDAISTLATNGAGKYDLTTSTSGDEVILHTGVGPSRLADTVVDETPVVIFTVDNVLLPAELFGKSSSPAPAPEPVSAPTPTPAKSPSPVEAPSPTAASPPAPPVDESSPEGAPSDSPTSSENSNAKNAAFHVNAPALFTALVTIAATSLLL.

An N-terminal signal peptide occupies residues 1–25; sequence MATSRAFTLFAFTLSLLTVASTVSG. 2 FAS1 domains span residues 26–172 and 187–327; these read HNIT…NAPI and GVSN…DNVL. 5 N-linked (GlcNAc...) asparagine glycosylation sites follow: Asn27, Asn128, Asn162, Asn190, and Asn244. The interval 336–397 is disordered; it reads SSSPAPAPEP…PTSSENSNAK (62 aa). Positions 340–374 are enriched in pro residues; that stretch reads APAPEPVSAPTPTPAKSPSPVEAPSPTAASPPAPP. Residues 386 to 397 are compositionally biased toward polar residues; the sequence is DSPTSSENSNAK. Asn398 carries the GPI-anchor amidated asparagine lipid modification. Positions 399–422 are cleaved as a propeptide — removed in mature form; the sequence is AAFHVNAPALFTALVTIAATSLLL.

The protein belongs to the fasciclin-like AGP family.

The protein localises to the cell membrane. In terms of biological role, may be a cell surface adhesion protein. This chain is Fasciclin-like arabinogalactan protein 10 (FLA10), found in Arabidopsis thaliana (Mouse-ear cress).